The following is a 207-amino-acid chain: Neuroendocrine protein 7B2 (207 aa).

Residues 1–22 (MVSTMLSGLVLWLTFGWTPALA) form the signal peptide. A disulfide bond links C116 and C125. S136 and S200 each carry phosphoserine. The disordered stretch occupies residues 168-207 (KGGQRRKRRSVNPYLQGQRLDNVVAKKSVPHFSDEDKDPE).

Belongs to the 7B2 family. As to quaternary structure, interacts with PCSK2/PC2 early in the secretory pathway. Dissociation occurs at later stages. Proteolytically cleaved in the Golgi by a furin-like convertase to generate bioactive peptides. Post-translationally, sulfated on tyrosine residues.

It localises to the secreted. In terms of biological role, acts as a molecular chaperone for PCSK2/PC2, preventing its premature activation in the regulated secretory pathway. Binds to inactive PCSK2 in the endoplasmic reticulum and facilitates its transport from there to later compartments of the secretory pathway where it is proteolytically matured and activated. Also required for cleavage of PCSK2 but does not appear to be involved in its folding. Plays a role in regulating pituitary hormone secretion. The C-terminal peptide inhibits PCSK2 in vitro. The polypeptide is Neuroendocrine protein 7B2 (SCG5) (Sus scrofa (Pig)).